We begin with the raw amino-acid sequence, 210 residues long: Chaperone protein TorD (210 aa).

This sequence belongs to the TorD/DmsD family. TorD subfamily.

It is found in the cytoplasm. Involved in the biogenesis of TorA. Acts on TorA before the insertion of the molybdenum cofactor and, as a result, probably favors a conformation of the apoenzyme that is competent for acquiring the cofactor. In Salmonella arizonae (strain ATCC BAA-731 / CDC346-86 / RSK2980), this protein is Chaperone protein TorD.